Reading from the N-terminus, the 298-residue chain is MLQTTSLSAMRIFEAAARLGSFRAAAEELNLSPSAVSHAIMRLERDLGVALFERTTRSVSLTVAGQTLLNHASNAFEELRRGVEQISSNKAQLLRLHCAPSFAAQVLSPRLPQFLKENPGIEVRVAASTNYARFVDGLFDADIVYGEPLNREDLIVIPLSEEIVLPLCAPDLAHQIKSPRDLFHQPLIRSDLKRIQWIDWFEANDLGPPPSPSMSFDRSFLAVDAAVNGLGIALESDVLARRELESGKLVRPLHRICRDNRYIGHYLAYPKSGSQRRLARAFADWLTRECQPASTGSE.

An HTH lysR-type domain is found at 5–62 (TSLSAMRIFEAAARLGSFRAAAEELNLSPSAVSHAIMRLERDLGVALFERTTRSVSLT). The segment at residues 22-42 (FRAAAEELNLSPSAVSHAIMR) is a DNA-binding region (H-T-H motif).

The protein belongs to the LysR transcriptional regulatory family.

This is an uncharacterized protein from Sinorhizobium fredii (strain NBRC 101917 / NGR234).